The following is a 616-amino-acid chain: Chaperone protein DnaK (616 aa).

Phosphothreonine; by autocatalysis is present on threonine 175. A disordered region spans residues 579–616; sequence GGDPSQAGGFDPNAAGGAQQEPHDDNVVDADFKVDDDK. The span at 599–616 shows a compositional bias: basic and acidic residues; sequence EPHDDNVVDADFKVDDDK.

Belongs to the heat shock protein 70 family.

Functionally, acts as a chaperone. This Clostridium botulinum (strain Eklund 17B / Type B) protein is Chaperone protein DnaK.